The following is a 254-amino-acid chain: MSKAPPLRLGVNIDHIATLRNARGGRHPDPLRAAFAAIEAGADGITAHLREDRRHIRDADMQRLKAEISKPLNFEMAATDDMIRIALGVKPHAVCLVPERREELTTEGGLDVVGQQASLGPAIARFNDAGIRTSLFIAADPAQIETAAKLKAPAIEIHTGAWCDAITDGDAAKANTEWQRIFAGAALARSAGLEVHAGHGLDYATAETISELPQIVELNIGFHMIGEALFVGLGETVRAMRAAMDRGRAKAIAA.

A 3-amino-2-oxopropyl phosphate-binding site is contributed by N12. Position 14-15 (D14–H15) interacts with 1-deoxy-D-xylulose 5-phosphate. Position 23 (R23) interacts with 3-amino-2-oxopropyl phosphate. Catalysis depends on H48, which acts as the Proton acceptor. The 1-deoxy-D-xylulose 5-phosphate site is built by R50 and H55. Catalysis depends on E75, which acts as the Proton acceptor. T105 lines the 1-deoxy-D-xylulose 5-phosphate pocket. The active-site Proton donor is the H199. 3-amino-2-oxopropyl phosphate-binding positions include G200 and G221–F222.

This sequence belongs to the PNP synthase family. In terms of assembly, homooctamer; tetramer of dimers.

It is found in the cytoplasm. The catalysed reaction is 3-amino-2-oxopropyl phosphate + 1-deoxy-D-xylulose 5-phosphate = pyridoxine 5'-phosphate + phosphate + 2 H2O + H(+). Its pathway is cofactor biosynthesis; pyridoxine 5'-phosphate biosynthesis; pyridoxine 5'-phosphate from D-erythrose 4-phosphate: step 5/5. Functionally, catalyzes the complicated ring closure reaction between the two acyclic compounds 1-deoxy-D-xylulose-5-phosphate (DXP) and 3-amino-2-oxopropyl phosphate (1-amino-acetone-3-phosphate or AAP) to form pyridoxine 5'-phosphate (PNP) and inorganic phosphate. This chain is Pyridoxine 5'-phosphate synthase, found in Rhodopseudomonas palustris (strain TIE-1).